The chain runs to 426 residues: Serine hydroxymethyltransferase (426 aa).

(6S)-5,6,7,8-tetrahydrofolate is bound by residues leucine 113 and 117–119; that span reads GHL. Lysine 222 carries the post-translational modification N6-(pyridoxal phosphate)lysine. Residue 363-365 coordinates (6S)-5,6,7,8-tetrahydrofolate; the sequence is SPF.

This sequence belongs to the SHMT family. In terms of assembly, homodimer. Pyridoxal 5'-phosphate is required as a cofactor.

The protein localises to the cytoplasm. It catalyses the reaction (6R)-5,10-methylene-5,6,7,8-tetrahydrofolate + glycine + H2O = (6S)-5,6,7,8-tetrahydrofolate + L-serine. Its pathway is one-carbon metabolism; tetrahydrofolate interconversion. It participates in amino-acid biosynthesis; glycine biosynthesis; glycine from L-serine: step 1/1. Its function is as follows. Catalyzes the reversible interconversion of serine and glycine with tetrahydrofolate (THF) serving as the one-carbon carrier. This reaction serves as the major source of one-carbon groups required for the biosynthesis of purines, thymidylate, methionine, and other important biomolecules. Also exhibits THF-independent aldolase activity toward beta-hydroxyamino acids, producing glycine and aldehydes, via a retro-aldol mechanism. The protein is Serine hydroxymethyltransferase of Azobacteroides pseudotrichonymphae genomovar. CFP2.